A 470-amino-acid polypeptide reads, in one-letter code: UDP-N-acetylmuramoylalanine--D-glutamate ligase (470 aa).

ATP is bound at residue 120 to 126 (GSNGKTT).

It belongs to the MurCDEF family.

Its subcellular location is the cytoplasm. It carries out the reaction UDP-N-acetyl-alpha-D-muramoyl-L-alanine + D-glutamate + ATP = UDP-N-acetyl-alpha-D-muramoyl-L-alanyl-D-glutamate + ADP + phosphate + H(+). The protein operates within cell wall biogenesis; peptidoglycan biosynthesis. Cell wall formation. Catalyzes the addition of glutamate to the nucleotide precursor UDP-N-acetylmuramoyl-L-alanine (UMA). The protein is UDP-N-acetylmuramoylalanine--D-glutamate ligase of Nitrosomonas eutropha (strain DSM 101675 / C91 / Nm57).